The chain runs to 276 residues: Small ribosomal subunit protein uS2 (276 aa).

The disordered stretch occupies residues 251–276 (AEEAPAAAEEAPAAEPAAEETPAAEA). The span at 252 to 276 (EEAPAAAEEAPAAEPAAEETPAAEA) shows a compositional bias: low complexity.

It belongs to the universal ribosomal protein uS2 family.

The polypeptide is Small ribosomal subunit protein uS2 (Jannaschia sp. (strain CCS1)).